Consider the following 121-residue polypeptide: Large ribosomal subunit protein uL18 (121 aa).

The protein belongs to the universal ribosomal protein uL18 family. As to quaternary structure, part of the 50S ribosomal subunit; part of the 5S rRNA/L5/L18/L25 subcomplex. Contacts the 5S and 23S rRNAs.

This is one of the proteins that bind and probably mediate the attachment of the 5S RNA into the large ribosomal subunit, where it forms part of the central protuberance. The sequence is that of Large ribosomal subunit protein uL18 from Spiroplasma kunkelii.